Consider the following 192-residue polypeptide: Pyruvate kinase (192 aa).

Arg-41 serves as a coordination point for substrate. K(+)-binding residues include Asn-43, Ser-45, Asp-75, and Thr-76. 43-46 contributes to the ATP binding site; sequence NFSH.

Belongs to the pyruvate kinase family. Mg(2+) serves as cofactor. The cofactor is K(+).

It catalyses the reaction pyruvate + ATP = phosphoenolpyruvate + ADP + H(+). The protein operates within carbohydrate degradation; glycolysis; pyruvate from D-glyceraldehyde 3-phosphate: step 5/5. In Spiroplasma citri, this protein is Pyruvate kinase (pyk).